The sequence spans 260 residues: DNA repair protein RecO (260 aa).

It belongs to the RecO family.

Its function is as follows. Involved in DNA repair and RecF pathway recombination. The polypeptide is DNA repair protein RecO (Desulfosudis oleivorans (strain DSM 6200 / JCM 39069 / Hxd3) (Desulfococcus oleovorans)).